The chain runs to 969 residues: Translation initiation factor IF-2 (969 aa).

The segment at 50-370 is disordered; it reads SFASKSAPAN…QAPSVGGVRL (321 aa). Residues 54-76 are compositionally biased toward low complexity; it reads KSAPANGAKPGPAASARPGAKPT. Over residues 77-87 the composition is skewed to pro residues; that stretch reads PGGPRPGPRTP. Residues 88-102 show a composition bias toward low complexity; it reads APAASAPQAPAEQTA. Residues 112 to 124 show a composition bias toward pro residues; that stretch reads AVKPGPAPTPARP. A compositionally biased stretch (low complexity) spans 125–164; sequence AAPEAPAAKAAPEAPAQRPTPGGPRPGQQQQRPGAPAQGG. Pro residues predominate over residues 240-267; it reads PGGPRPSPGSMPPRPNPGAMPQRTPRPG. The span at 269–340 shows a compositional bias: gly residues; the sequence is SAGGRPGRPG…GAAGAFGRPG (72 aa). Residues 344–353 are compositionally biased toward basic residues; that stretch reads RRGRKSKRQK. The 172-residue stretch at 465–636 folds into the tr-type G domain; it reads VRPPVVTVMG…AVLLTADAAL (172 aa). The segment at 474 to 481 is G1; sequence GHVDHGKT. 474-481 serves as a coordination point for GTP; sequence GHVDHGKT. Residues 499–503 form a G2 region; that stretch reads GITQH. A G3 region spans residues 524 to 527; it reads DTPG. GTP is bound by residues 524–528 and 578–581; these read DTPGH and NKID. The interval 578–581 is G4; the sequence is NKID. The G5 stretch occupies residues 614–616; it reads SAK.

It belongs to the TRAFAC class translation factor GTPase superfamily. Classic translation factor GTPase family. IF-2 subfamily.

Its subcellular location is the cytoplasm. One of the essential components for the initiation of protein synthesis. Protects formylmethionyl-tRNA from spontaneous hydrolysis and promotes its binding to the 30S ribosomal subunits. Also involved in the hydrolysis of GTP during the formation of the 70S ribosomal complex. This is Translation initiation factor IF-2 from Nocardia farcinica (strain IFM 10152).